Reading from the N-terminus, the 198-residue chain is Thymidylate kinase (198 aa).

An ATP-binding site is contributed by 10-17 (GLDGSGKT).

It belongs to the thymidylate kinase family.

It carries out the reaction dTMP + ATP = dTDP + ADP. Its function is as follows. Phosphorylation of dTMP to form dTDP in both de novo and salvage pathways of dTTP synthesis. The polypeptide is Thymidylate kinase (Thermus thermophilus (strain ATCC BAA-163 / DSM 7039 / HB27)).